Reading from the N-terminus, the 141-residue chain is Large ribosomal subunit protein uL14 (141 aa).

The protein belongs to the universal ribosomal protein uL14 family. As to quaternary structure, part of the 50S ribosomal subunit. Forms a cluster with proteins L3 and L24e, part of which may contact the 16S rRNA in 2 intersubunit bridges.

In terms of biological role, binds to 23S rRNA. Forms part of two intersubunit bridges in the 70S ribosome. The chain is Large ribosomal subunit protein uL14 from Pyrococcus abyssi (strain GE5 / Orsay).